Reading from the N-terminus, the 110-residue chain is MTSLLTFCAAALMEIAGCFAFWAWLRLDKSPLWLIPGMLALALFAYLLTLADSPLAGRAYAAYGGIYIASALLWGWAIEGNRPDQWDVIGAAICLVGMSVILFGPRTLPA.

The next 4 membrane-spanning stretches (helical) occupy residues 4–24 (LLTF…FWAW), 31–51 (PLWL…LTLA), 59–79 (AYAA…WAIE), and 85–105 (QWDV…LFGP).

This sequence belongs to the UPF0060 family.

Its subcellular location is the cell inner membrane. This Rhodopseudomonas palustris (strain ATCC BAA-98 / CGA009) protein is UPF0060 membrane protein RPA3838.